We begin with the raw amino-acid sequence, 95 residues long: Co-chaperonin GroES (95 aa).

Belongs to the GroES chaperonin family. In terms of assembly, heptamer of 7 subunits arranged in a ring. Interacts with the chaperonin GroEL.

It is found in the cytoplasm. Functionally, together with the chaperonin GroEL, plays an essential role in assisting protein folding. The GroEL-GroES system forms a nano-cage that allows encapsulation of the non-native substrate proteins and provides a physical environment optimized to promote and accelerate protein folding. GroES binds to the apical surface of the GroEL ring, thereby capping the opening of the GroEL channel. In Clostridium acetobutylicum (strain ATCC 824 / DSM 792 / JCM 1419 / IAM 19013 / LMG 5710 / NBRC 13948 / NRRL B-527 / VKM B-1787 / 2291 / W), this protein is Co-chaperonin GroES.